The following is a 431-amino-acid chain: Cyclic GMP-AMP synthase-like receptor (431 aa).

Residues Ser73 and 85 to 87 (EFD) each bind ATP. The Mg(2+) site is built by Glu85, Asp87, and Asp212. GTP is bound at residue Asp212. Residues Lys290 and 304–308 (SYALK) each bind ATP. Glu316 is a binding site for Mn(2+).

This sequence belongs to the mab-21 family. Mg(2+) is required as a cofactor. The cofactor is Mn(2+).

The catalysed reaction is GTP + ATP = 2',3'-cGAMP + 2 diphosphate. It carries out the reaction GTP + ATP = pppGp(2'-5')A + diphosphate. It catalyses the reaction pppGp(2'-5')A = 2',3'-cGAMP + diphosphate. Nucleotidyltransferase that catalyzes the formation of cyclic GMP-AMP (2',3'-cGAMP) from ATP and GTP and plays a key role in innate immunity. Acts as a key sensor of double-stranded RNA (dsRNA), the presence of dsRNA in the cytoplasm being a danger signal that triggers the immune responses. Directly binds dsRNA, activating the nucleotidyltransferase activity, leading to synthesis of 2',3'-cGAMP, a second messenger that binds to and activates Sting, thereby triggering the immune response via activation of the NF-kappa-B transcription factor. The polypeptide is Cyclic GMP-AMP synthase-like receptor (Frankliniella occidentalis (Western flower thrips)).